Here is a 930-residue protein sequence, read N- to C-terminus: Isoleucine--tRNA ligase (930 aa).

The disordered stretch occupies residues 1-21; it reads MRVKDTLNLGKTKFPMRGRLP. Residues 57-67 carry the 'HIGH' region motif; the sequence is PYANGPIHIGH. An L-isoleucyl-5'-AMP-binding site is contributed by Glu-555. Residues 596–600 carry the 'KMSKS' region motif; it reads KMSKS. Residue Lys-599 coordinates ATP. Zn(2+) is bound by residues Cys-889, Cys-892, Cys-909, and Cys-912.

Belongs to the class-I aminoacyl-tRNA synthetase family. IleS type 1 subfamily. In terms of assembly, monomer. Requires Zn(2+) as cofactor.

It is found in the cytoplasm. It catalyses the reaction tRNA(Ile) + L-isoleucine + ATP = L-isoleucyl-tRNA(Ile) + AMP + diphosphate. Catalyzes the attachment of isoleucine to tRNA(Ile). As IleRS can inadvertently accommodate and process structurally similar amino acids such as valine, to avoid such errors it has two additional distinct tRNA(Ile)-dependent editing activities. One activity is designated as 'pretransfer' editing and involves the hydrolysis of activated Val-AMP. The other activity is designated 'posttransfer' editing and involves deacylation of mischarged Val-tRNA(Ile). This Limosilactobacillus fermentum (strain NBRC 3956 / LMG 18251) (Lactobacillus fermentum) protein is Isoleucine--tRNA ligase.